The chain runs to 470 residues: Cyclin-B1-3 (470 aa).

This sequence belongs to the cyclin family. Cyclin AB subfamily.

This is Cyclin-B1-3 (CYCB1-3) from Oryza sativa subsp. japonica (Rice).